The sequence spans 529 residues: Probable serine carboxypeptidase ARB_06414 (529 aa).

An N-terminal signal peptide occupies residues M1–A19. A disordered region spans residues P171 to V191. Residue S225 is part of the active site. 2 N-linked (GlcNAc...) asparagine glycosylation sites follow: N284 and N377. D434 is an active-site residue. Residues N440 and N448 are each glycosylated (N-linked (GlcNAc...) asparagine). H503 is a catalytic residue.

The protein belongs to the peptidase S10 family.

It is found in the secreted. In terms of biological role, removes acidic, neutral and basic amino acids as well as proline from the C-terminal position. This Arthroderma benhamiae (strain ATCC MYA-4681 / CBS 112371) (Trichophyton mentagrophytes) protein is Probable serine carboxypeptidase ARB_06414.